The chain runs to 568 residues: Proline--tRNA ligase (568 aa).

It belongs to the class-II aminoacyl-tRNA synthetase family. ProS type 1 subfamily. In terms of assembly, homodimer.

The protein localises to the cytoplasm. It catalyses the reaction tRNA(Pro) + L-proline + ATP = L-prolyl-tRNA(Pro) + AMP + diphosphate. Its function is as follows. Catalyzes the attachment of proline to tRNA(Pro) in a two-step reaction: proline is first activated by ATP to form Pro-AMP and then transferred to the acceptor end of tRNA(Pro). As ProRS can inadvertently accommodate and process non-cognate amino acids such as alanine and cysteine, to avoid such errors it has two additional distinct editing activities against alanine. One activity is designated as 'pretransfer' editing and involves the tRNA(Pro)-independent hydrolysis of activated Ala-AMP. The other activity is designated 'posttransfer' editing and involves deacylation of mischarged Ala-tRNA(Pro). The misacylated Cys-tRNA(Pro) is not edited by ProRS. The protein is Proline--tRNA ligase of Listeria monocytogenes serovar 1/2a (strain ATCC BAA-679 / EGD-e).